The primary structure comprises 296 residues: Porphobilinogen deaminase (296 aa).

At Cys235 the chain carries S-(dipyrrolylmethanemethyl)cysteine.

Belongs to the HMBS family. In terms of assembly, monomer. Dipyrromethane serves as cofactor.

The catalysed reaction is 4 porphobilinogen + H2O = hydroxymethylbilane + 4 NH4(+). It participates in porphyrin-containing compound metabolism; protoporphyrin-IX biosynthesis; coproporphyrinogen-III from 5-aminolevulinate: step 2/4. In terms of biological role, tetrapolymerization of the monopyrrole PBG into the hydroxymethylbilane pre-uroporphyrinogen in several discrete steps. This chain is Porphobilinogen deaminase, found in Alkaliphilus oremlandii (strain OhILAs) (Clostridium oremlandii (strain OhILAs)).